We begin with the raw amino-acid sequence, 443 residues long: Chromosomal replication initiator protein DnaA (443 aa).

A domain I, interacts with DnaA modulators region spans residues 1 to 73 (MYGDYRQIWE…YDAASKVTNR (73 aa)). Residues 73–106 (RFIEIKILSEDEEEYREIKESIERENSSESTLLS) form a domain II region. A domain III, AAA+ region region spans residues 107 to 323 (TLNPKYTFDT…GALIRIVAFA (217 aa)). Positions 151, 153, 154, and 155 each coordinate ATP. Residues 324–443 (TLTKSNIDLE…EELKKRIKGY (120 aa)) are domain IV, binds dsDNA.

The protein belongs to the DnaA family. Oligomerizes as a right-handed, spiral filament on DNA at oriC.

It localises to the cytoplasm. Its function is as follows. Plays an essential role in the initiation and regulation of chromosomal replication. ATP-DnaA binds to the origin of replication (oriC) to initiate formation of the DNA replication initiation complex once per cell cycle. Binds the DnaA box (a 9 base pair repeat at the origin) and separates the double-stranded (ds)DNA. Forms a right-handed helical filament on oriC DNA; dsDNA binds to the exterior of the filament while single-stranded (ss)DNA is stabiized in the filament's interior. The ATP-DnaA-oriC complex binds and stabilizes one strand of the AT-rich DNA unwinding element (DUE), permitting loading of DNA polymerase. After initiation quickly degrades to an ADP-DnaA complex that is not apt for DNA replication. Binds acidic phospholipids. The polypeptide is Chromosomal replication initiator protein DnaA (Caldanaerobacter subterraneus subsp. tengcongensis (strain DSM 15242 / JCM 11007 / NBRC 100824 / MB4) (Thermoanaerobacter tengcongensis)).